The chain runs to 947 residues: Serine-aspartate repeat-containing protein C (947 aa).

The signal sequence occupies residues 1–50 (MNNKKTATNRKGMIPNRLNKFSIRKYSVGTASILVGTTLIFGLSGHEAKA). The short motif at 21 to 32 (FSIRKYSVGTAS) is the YSIRK-G/S signaling motif element. The segment at 51–164 (AEHTNGELNQ…STTPKTTTIK (114 aa)) is disordered. The segment at 51–495 (AEHTNGELNQ…GSSTANGDQK (445 aa)) is ligand binding A region. Over residues 56-71 (GELNQSKNETTAPSEN) the composition is skewed to polar residues. Basic and acidic residues predominate over residues 72-83 (KTTKKVDSRQLK). Over residues 84-155 (DNTQTATADQ…SNLTQAKDVS (72 aa)) the composition is skewed to polar residues. CNA-B domains are found at residues 496-606 (KYNL…YKTP) and 607-717 (KYSL…EEET). Positions 678–927 (TQTGTNTTED…NNSNNGTLFG (250 aa)) are disordered. Composition is skewed to acidic residues over residues 685 to 695 (TEDDKDADGGE) and 712 to 886 (YYEE…DSDS). The LPXTG sorting signal signature appears at 910–914 (LPETG). A compositionally biased stretch (low complexity) spans 912–927 (ETGSENNNSNNGTLFG). Pentaglycyl murein peptidoglycan amidated threonine is present on T913. Positions 914–947 (GSENNNSNNGTLFGGLFAALGSLLLFGRRKKQNK) are cleaved as a propeptide — removed by sortase.

It belongs to the serine-aspartate repeat-containing protein (SDr) family. As to quaternary structure, homodimerizes; via N2-Domain. Interacts with host NRXN1; this interaction mediates bacterial attachment to host cells.

It localises to the secreted. The protein resides in the cell wall. Its function is as follows. Cell surface-associated calcium-binding protein which plays an important role in adhesion and pathogenesis. Mediates interactions with components of the extracellular matrix such as host NRXN1 to promote bacterial adhesion. The polypeptide is Serine-aspartate repeat-containing protein C (sdrC) (Staphylococcus aureus (strain Newman)).